Consider the following 396-residue polypeptide: NADH-quinone oxidoreductase subunit D 1 (396 aa).

The protein belongs to the complex I 49 kDa subunit family. As to quaternary structure, NDH-1 is composed of 14 different subunits. Subunits NuoB, C, D, E, F, and G constitute the peripheral sector of the complex.

The protein resides in the cell inner membrane. The catalysed reaction is a quinone + NADH + 5 H(+)(in) = a quinol + NAD(+) + 4 H(+)(out). NDH-1 shuttles electrons from NADH, via FMN and iron-sulfur (Fe-S) centers, to quinones in the respiratory chain. The immediate electron acceptor for the enzyme in this species is believed to be ubiquinone. Couples the redox reaction to proton translocation (for every two electrons transferred, four hydrogen ions are translocated across the cytoplasmic membrane), and thus conserves the redox energy in a proton gradient. This chain is NADH-quinone oxidoreductase subunit D 1, found in Beijerinckia indica subsp. indica (strain ATCC 9039 / DSM 1715 / NCIMB 8712).